Reading from the N-terminus, the 122-residue chain is Large ribosomal subunit protein bL12 (122 aa).

It belongs to the bacterial ribosomal protein bL12 family. In terms of assembly, homodimer. Part of the ribosomal stalk of the 50S ribosomal subunit. Forms a multimeric L10(L12)X complex, where L10 forms an elongated spine to which 2 to 4 L12 dimers bind in a sequential fashion. Binds GTP-bound translation factors.

Forms part of the ribosomal stalk which helps the ribosome interact with GTP-bound translation factors. Is thus essential for accurate translation. This is Large ribosomal subunit protein bL12 from Staphylococcus haemolyticus (strain JCSC1435).